The sequence spans 63 residues: Large ribosomal subunit protein uL30 (63 aa).

Belongs to the universal ribosomal protein uL30 family. As to quaternary structure, part of the 50S ribosomal subunit.

This chain is Large ribosomal subunit protein uL30, found in Xanthomonas axonopodis pv. citri (strain 306).